Here is a 684-residue protein sequence, read N- to C-terminus: Putative glucan endo-1,3-beta-glucosidase btgC (684 aa).

A compositionally biased stretch (polar residues) spans 1–10; sequence MAGVNRSFSY. Disordered regions lie at residues 1 to 38, 124 to 143, and 157 to 182; these read MAGV…LYST, AERD…APPD, and DSYS…TTPS. The Cytoplasmic segment spans residues 1–302; sequence MAGVNRSFSY…HIIGGGSRKR (302 aa). Over residues 12–32 the composition is skewed to basic and acidic residues; sequence RGDDALLRDDEREISPLRSAE. A helical; Signal-anchor for type II membrane protein membrane pass occupies residues 303-323; that stretch reads GWIVGLILAAVIVAAIVGGAV. Topologically, residues 324–684 are extracellular; the sequence is GGILGHQEHD…IPDCGGKTIT (361 aa). The tract at residues 330-358 is disordered; it reads QEHDGDTSSSSSSSSSSGTGSGGSDKGDG. Low complexity predominate over residues 336-347; that stretch reads TSSSSSSSSSSG. 4 N-linked (GlcNAc...) asparagine glycosylation sites follow: Asn404, Asn427, Asn455, and Asn474. Residue Glu487 is the Proton donor of the active site. Catalysis depends on Glu586, which acts as the Nucleophile. Asn631 is a glycosylation site (N-linked (GlcNAc...) asparagine).

The protein belongs to the glycosyl hydrolase 17 family.

It is found in the cell membrane. It catalyses the reaction Hydrolysis of (1-&gt;3)-beta-D-glucosidic linkages in (1-&gt;3)-beta-D-glucans.. Functionally, glucanases play a role in cell expansion during growth, in cell-cell fusion during mating, and in spore release during sporulation. This enzyme may be involved in beta-glucan degradation. Active on laminarin and lichenan. In Aspergillus niger (strain ATCC MYA-4892 / CBS 513.88 / FGSC A1513), this protein is Putative glucan endo-1,3-beta-glucosidase btgC (btgC).